A 189-amino-acid polypeptide reads, in one-letter code: Cancer/testis antigen family 45 member A3 (189 aa).

The disordered stretch occupies residues 81–119; sequence KDRMMQKPGSNAPVGGNVTSSFSGDDLECRETASSPKSQ.

Belongs to the CT45 family. In terms of tissue distribution, testis specific. Expressed in cancer cell lines.

It is found in the nucleus. The chain is Cancer/testis antigen family 45 member A3 from Homo sapiens (Human).